The primary structure comprises 275 residues: Phosphonoacetaldehyde hydrolase (275 aa).

Catalysis depends on Asp-15, which acts as the Nucleophile. Positions 15 and 17 each coordinate Mg(2+). Lys-56 functions as the Schiff-base intermediate with substrate in the catalytic mechanism. Mg(2+) is bound at residue Asp-189.

This sequence belongs to the HAD-like hydrolase superfamily. PhnX family. In terms of assembly, homodimer. Mg(2+) is required as a cofactor.

The catalysed reaction is phosphonoacetaldehyde + H2O = acetaldehyde + phosphate + H(+). Its function is as follows. Involved in phosphonate degradation. This Pseudomonas paraeruginosa (strain DSM 24068 / PA7) (Pseudomonas aeruginosa (strain PA7)) protein is Phosphonoacetaldehyde hydrolase.